The sequence spans 454 residues: tRNA modification GTPase MnmE (454 aa).

The (6S)-5-formyl-5,6,7,8-tetrahydrofolate site is built by Arg-23, Glu-80, and Lys-120. A TrmE-type G domain is found at 216–377; that stretch reads GMKVVIAGRP…LRNHLKQSMG (162 aa). Asn-226 is a K(+) binding site. GTP contacts are provided by residues 226–231, 245–251, 270–273, 335–338, and 358–360; these read NAGKSS, TDIAGTT, DTAG, NKAD, and SAR. Ser-230 lines the Mg(2+) pocket. Residues Thr-245, Ile-247, and Thr-250 each contribute to the K(+) site. Thr-251 is a Mg(2+) binding site. Lys-454 is a (6S)-5-formyl-5,6,7,8-tetrahydrofolate binding site.

The protein belongs to the TRAFAC class TrmE-Era-EngA-EngB-Septin-like GTPase superfamily. TrmE GTPase family. In terms of assembly, homodimer. Heterotetramer of two MnmE and two MnmG subunits. It depends on K(+) as a cofactor.

The protein resides in the cytoplasm. Its function is as follows. Exhibits a very high intrinsic GTPase hydrolysis rate. Involved in the addition of a carboxymethylaminomethyl (cmnm) group at the wobble position (U34) of certain tRNAs, forming tRNA-cmnm(5)s(2)U34. The polypeptide is tRNA modification GTPase MnmE (Citrobacter koseri (strain ATCC BAA-895 / CDC 4225-83 / SGSC4696)).